The primary structure comprises 119 residues: Flagellar transcriptional regulator FlhD (119 aa).

The protein belongs to the FlhD family. As to quaternary structure, homodimer; disulfide-linked. Forms a heterohexamer composed of two FlhC and four FlhD subunits. Each FlhC binds a FlhD dimer, forming a heterotrimer, and a hexamer assembles by dimerization of two heterotrimers.

The protein localises to the cytoplasm. In terms of biological role, functions in complex with FlhC as a master transcriptional regulator that regulates transcription of several flagellar and non-flagellar operons by binding to their promoter region. Activates expression of class 2 flagellar genes, including fliA, which is a flagellum-specific sigma factor that turns on the class 3 genes. Also regulates genes whose products function in a variety of physiological pathways. The protein is Flagellar transcriptional regulator FlhD of Pectobacterium atrosepticum (strain SCRI 1043 / ATCC BAA-672) (Erwinia carotovora subsp. atroseptica).